Consider the following 85-residue polypeptide: uncharacterized protein (85 aa).

Positions 64 to 76 (DPPVRRSGGREQH) are enriched in basic and acidic residues. The segment at 64–85 (DPPVRRSGGREQHLAQVWRATS) is disordered.

This is an uncharacterized protein from Mycobacterium bovis (strain ATCC BAA-935 / AF2122/97).